Consider the following 465-residue polypeptide: Poly(A) polymerase I (465 aa).

Residues Asp80, Asp82, and Asp162 contribute to the active site. The disordered stretch occupies residues 430 to 465 (APPEQKGMLNELDDDPAPRRRRSRPRKRAPRREGTV). Basic residues predominate over residues 448-459 (RRRRSRPRKRAP).

Belongs to the tRNA nucleotidyltransferase/poly(A) polymerase family.

It catalyses the reaction RNA(n) + ATP = RNA(n)-3'-adenine ribonucleotide + diphosphate. Functionally, adds poly(A) tail to the 3' end of many RNAs, which usually targets these RNAs for decay. Plays a significant role in the global control of gene expression, through influencing the rate of transcript degradation, and in the general RNA quality control. In Salmonella typhi, this protein is Poly(A) polymerase I.